A 277-amino-acid polypeptide reads, in one-letter code: Hydroxyethylthiazole kinase (277 aa).

Methionine 55 lines the substrate pocket. Arginine 130 and serine 176 together coordinate ATP. Glycine 203 contributes to the substrate binding site.

Belongs to the Thz kinase family. It depends on Mg(2+) as a cofactor.

It catalyses the reaction 5-(2-hydroxyethyl)-4-methylthiazole + ATP = 4-methyl-5-(2-phosphooxyethyl)-thiazole + ADP + H(+). It functions in the pathway cofactor biosynthesis; thiamine diphosphate biosynthesis; 4-methyl-5-(2-phosphoethyl)-thiazole from 5-(2-hydroxyethyl)-4-methylthiazole: step 1/1. In terms of biological role, catalyzes the phosphorylation of the hydroxyl group of 4-methyl-5-beta-hydroxyethylthiazole (THZ). This Cutibacterium acnes (strain DSM 16379 / KPA171202) (Propionibacterium acnes) protein is Hydroxyethylthiazole kinase.